The following is a 252-amino-acid chain: Imidazole glycerol phosphate synthase subunit HisF (252 aa).

Catalysis depends on residues aspartate 11 and aspartate 130.

This sequence belongs to the HisA/HisF family. As to quaternary structure, heterodimer of HisH and HisF.

The protein localises to the cytoplasm. It catalyses the reaction 5-[(5-phospho-1-deoxy-D-ribulos-1-ylimino)methylamino]-1-(5-phospho-beta-D-ribosyl)imidazole-4-carboxamide + L-glutamine = D-erythro-1-(imidazol-4-yl)glycerol 3-phosphate + 5-amino-1-(5-phospho-beta-D-ribosyl)imidazole-4-carboxamide + L-glutamate + H(+). Its pathway is amino-acid biosynthesis; L-histidine biosynthesis; L-histidine from 5-phospho-alpha-D-ribose 1-diphosphate: step 5/9. IGPS catalyzes the conversion of PRFAR and glutamine to IGP, AICAR and glutamate. The HisF subunit catalyzes the cyclization activity that produces IGP and AICAR from PRFAR using the ammonia provided by the HisH subunit. The sequence is that of Imidazole glycerol phosphate synthase subunit HisF from Dictyoglomus turgidum (strain DSM 6724 / Z-1310).